The chain runs to 220 residues: Glutamine amidotransferase-like class 1 domain-containing protein 1 (220 aa).

The first 35 residues, 1–35, serve as a signal peptide directing secretion; the sequence is MASERLPSRPACLLVASGAAEGVSAQSFLHCFTLA. Residues Asn-57 and Asn-201 are each glycosylated (N-linked (GlcNAc...) asparagine).

The protein belongs to the peptidase C56 family. In terms of assembly, homotetramer. Component of the FERRY complex composed of five subunits, TBCK, PPP1R21, FERRY3, CRYZL1 and GATD1 with a ratio of 1:2:1:2:4, respectively.

The protein localises to the secreted. The protein resides in the early endosome. In terms of biological role, component of the FERRY complex (Five-subunit Endosomal Rab5 and RNA/ribosome intermediary). The FERRY complex directly interacts with mRNAs and RAB5A, and functions as a RAB5A effector involved in the localization and the distribution of specific mRNAs most likely by mediating their endosomal transport. The complex recruits mRNAs and ribosomes to early endosomes through direct mRNA-interaction. The polypeptide is Glutamine amidotransferase-like class 1 domain-containing protein 1 (Bos taurus (Bovine)).